Reading from the N-terminus, the 456-residue chain is Methylenetetrahydrofolate--tRNA-(uracil-5-)-methyltransferase TrmFO (456 aa).

Residue 11-16 (GAGLAG) participates in FAD binding.

It belongs to the MnmG family. TrmFO subfamily. FAD is required as a cofactor.

It localises to the cytoplasm. The enzyme catalyses uridine(54) in tRNA + (6R)-5,10-methylene-5,6,7,8-tetrahydrofolate + NADH + H(+) = 5-methyluridine(54) in tRNA + (6S)-5,6,7,8-tetrahydrofolate + NAD(+). It carries out the reaction uridine(54) in tRNA + (6R)-5,10-methylene-5,6,7,8-tetrahydrofolate + NADPH + H(+) = 5-methyluridine(54) in tRNA + (6S)-5,6,7,8-tetrahydrofolate + NADP(+). Its function is as follows. Catalyzes the folate-dependent formation of 5-methyl-uridine at position 54 (M-5-U54) in all tRNAs. The sequence is that of Methylenetetrahydrofolate--tRNA-(uracil-5-)-methyltransferase TrmFO from Synechococcus sp. (strain CC9605).